The following is a 193-amino-acid chain: 3-isopropylmalate dehydratase small subunit (193 aa).

Belongs to the LeuD family. LeuD type 1 subfamily. Heterodimer of LeuC and LeuD.

It catalyses the reaction (2R,3S)-3-isopropylmalate = (2S)-2-isopropylmalate. It participates in amino-acid biosynthesis; L-leucine biosynthesis; L-leucine from 3-methyl-2-oxobutanoate: step 2/4. Functionally, catalyzes the isomerization between 2-isopropylmalate and 3-isopropylmalate, via the formation of 2-isopropylmaleate. The sequence is that of 3-isopropylmalate dehydratase small subunit from Bacillus cereus (strain B4264).